Reading from the N-terminus, the 101-residue chain is Small ribosomal subunit protein uS14 (101 aa).

Belongs to the universal ribosomal protein uS14 family. Part of the 30S ribosomal subunit. Contacts proteins S3 and S10.

Functionally, binds 16S rRNA, required for the assembly of 30S particles and may also be responsible for determining the conformation of the 16S rRNA at the A site. The sequence is that of Small ribosomal subunit protein uS14 from Polynucleobacter necessarius subsp. necessarius (strain STIR1).